The chain runs to 634 residues: 1-deoxy-D-xylulose-5-phosphate synthase (634 aa).

Residues histidine 74 and 115-117 contribute to the thiamine diphosphate site; that span reads AHS. Aspartate 146 is a binding site for Mg(2+). Thiamine diphosphate-binding positions include 147-148, asparagine 176, tyrosine 283, and glutamate 365; that span reads GA. Asparagine 176 is a Mg(2+) binding site.

The protein belongs to the transketolase family. DXPS subfamily. In terms of assembly, homodimer. Mg(2+) serves as cofactor. Requires thiamine diphosphate as cofactor.

It carries out the reaction D-glyceraldehyde 3-phosphate + pyruvate + H(+) = 1-deoxy-D-xylulose 5-phosphate + CO2. The protein operates within metabolic intermediate biosynthesis; 1-deoxy-D-xylulose 5-phosphate biosynthesis; 1-deoxy-D-xylulose 5-phosphate from D-glyceraldehyde 3-phosphate and pyruvate: step 1/1. Its function is as follows. Catalyzes the acyloin condensation reaction between C atoms 2 and 3 of pyruvate and glyceraldehyde 3-phosphate to yield 1-deoxy-D-xylulose-5-phosphate (DXP). The chain is 1-deoxy-D-xylulose-5-phosphate synthase from Burkholderia thailandensis (strain ATCC 700388 / DSM 13276 / CCUG 48851 / CIP 106301 / E264).